Reading from the N-terminus, the 506-residue chain is Alpha-L-arabinofuranosidase B (506 aa).

Residues 1–26 form the signal peptide; it reads MSSGLSLERACAVALGIVASASLVAA. Residues 27–343 form a catalytic region; the sequence is GPCDIYSSGG…ADIVAAKYAI (317 aa). Intrachain disulfides connect Cys-29/Cys-39, Cys-89/Cys-94, and Cys-184/Cys-185. N-linked (GlcNAc...) asparagine glycosylation occurs at Asn-91. Substrate is bound at residue Asp-227. The Nucleophile role is filled by Glu-229. The substrate site is built by Asn-230 and Gly-304. Asp-305 (proton donor) is an active-site residue. The tract at residues 344–506 is ABD; sequence ASLTSGPALT…VSWVVSTGFA (163 aa). An intrachain disulfide couples Cys-409 to Cys-447. Positions 424, 426, 427, 443, 471, 473, 476, and 496 each coordinate substrate.

Belongs to the glycosyl hydrolase 54 family.

Its subcellular location is the secreted. It carries out the reaction Hydrolysis of terminal non-reducing alpha-L-arabinofuranoside residues in alpha-L-arabinosides.. The protein operates within glycan metabolism; L-arabinan degradation. In terms of biological role, alpha-L-arabinofuranosidase involved in the degradation of arabinoxylan, a major component of plant hemicellulose. Able to hydrolyze 1,5-, 1,3- and 1,2-alpha-linkages not only in L-arabinofuranosyl oligosaccharides, but also in polysaccharides containing terminal non-reducing L-arabinofuranoses in side chains, like L-arabinan, arabinogalactan and arabinoxylan. This chain is Alpha-L-arabinofuranosidase B (abfB), found in Aspergillus oryzae (strain ATCC 42149 / RIB 40) (Yellow koji mold).